A 62-amino-acid polypeptide reads, in one-letter code: Disintegrin atropoimin (62 aa).

The Disintegrin domain maps to glutamate 1–glycine 62. 5 cysteine pairs are disulfide-bonded: cysteine 6/cysteine 21, cysteine 8/cysteine 16, cysteine 15/cysteine 38, cysteine 29/cysteine 35, and cysteine 34/cysteine 48. A Cell attachment site motif is present at residues glycine 41–aspartate 42.

The protein belongs to the venom metalloproteinase (M12B) family. P-II subfamily. P-IIa sub-subfamily. As to quaternary structure, monomer. As to expression, expressed by the venom gland.

Its subcellular location is the secreted. Inhibits ADP- (IC(50)=63 nM) and collagen-induced (IC(50)=53 nM) aggregation of human platelets. In vitro, inhibits adhesion of endothelial cells to vitronectin, type-I collagen and, to a lower degree, fibronectin and laminin. The protein is Disintegrin atropoimin of Metlapilcoatlus mexicanus (Central American jumping pitviper).